The following is a 308-amino-acid chain: Protoheme IX farnesyltransferase 2 (308 aa).

9 helical membrane-spanning segments follow: residues valine 20 to alanine 40, alanine 47 to isoleucine 67, isoleucine 92 to tryptophan 114, leucine 118 to leucine 137, valine 144 to alanine 164, leucine 174 to phenylalanine 194, leucine 218 to glycine 238, threonine 240 to leucine 260, and glutamine 275 to phenylalanine 295.

It belongs to the UbiA prenyltransferase family. Protoheme IX farnesyltransferase subfamily.

It is found in the cell inner membrane. The enzyme catalyses heme b + (2E,6E)-farnesyl diphosphate + H2O = Fe(II)-heme o + diphosphate. The protein operates within porphyrin-containing compound metabolism; heme O biosynthesis; heme O from protoheme: step 1/1. Converts heme B (protoheme IX) to heme O by substitution of the vinyl group on carbon 2 of heme B porphyrin ring with a hydroxyethyl farnesyl side group. The protein is Protoheme IX farnesyltransferase 2 of Shewanella loihica (strain ATCC BAA-1088 / PV-4).